Consider the following 187-residue polypeptide: Thermosensitive gluconokinase (187 aa).

10–17 (GVSGSGKT) contacts ATP.

Belongs to the gluconokinase GntK/GntV family.

The enzyme catalyses D-gluconate + ATP = 6-phospho-D-gluconate + ADP + H(+). It functions in the pathway carbohydrate acid metabolism; L-idonate degradation. The protein is Thermosensitive gluconokinase (idnK) of Escherichia coli (strain K12).